Consider the following 476-residue polypeptide: Homeobox protein invected (476 aa).

Disordered regions lie at residues 1–43, 273–331, and 347–381; these read MAAV…SEDI, KTRY…TSGD, and DRPSSGRSPRTRRPKKPPGDTASNDEKRPRTAFSG. The segment covering 23-32 has biased composition (polar residues); sequence SPNTRDTTSP. Basic and acidic residues-rich tracts occupy residues 33-43 and 292-305; these read ECHDDEKSEDI and KLDEARVPDIKTPD. Residues 318 to 331 are compositionally biased toward low complexity; that stretch reads GSNSGSTSGATSGD. Positions 372–431 form a DNA-binding region, homeobox; sequence EKRPRTAFSGPQLARLKHEFAENRYLTERRRQSLAAELGLAEAQIKIWFQNKRAKIKKAS.

It belongs to the engrailed homeobox family. As to expression, expressed in the middle silk gland but not in the posterior silk gland during the fourth molt/fifth intermolt period.

It localises to the nucleus. This protein might be involved in the compartmentalization of the silk gland. The polypeptide is Homeobox protein invected (INV) (Bombyx mori (Silk moth)).